The chain runs to 144 residues: Phospholipase A2, membrane associated (144 aa).

The signal sequence occupies residues M1–G20. Cystine bridges form between C46-C137, C48-C64, C63-C117, C69-C144, C70-C110, C79-C103, and C97-C108. Ca(2+)-binding residues include H47, G49, and G51. H67 is an active-site residue. A Ca(2+)-binding site is contributed by D68. D111 is an active-site residue.

Belongs to the phospholipase A2 family. Ca(2+) is required as a cofactor. In terms of tissue distribution, expressed in various tissues including heart, kidney, liver, lung, pancreas, placenta, skeletal muscle, prostate, ovary, colon and small intestine. Not detected in lymphoid organs and brain. Expressed in platelets (at protein level).

The protein localises to the secreted. It localises to the cell membrane. It is found in the mitochondrion outer membrane. It catalyses the reaction a 1,2-diacyl-sn-glycero-3-phosphoethanolamine + H2O = a 1-acyl-sn-glycero-3-phosphoethanolamine + a fatty acid + H(+). It carries out the reaction 1-hexadecanoyl-2-(9Z-octadecenoyl)-sn-glycero-3-phosphoethanolamine + H2O = 1-hexadecanoyl-sn-glycero-3-phosphoethanolamine + (9Z)-octadecenoate + H(+). The catalysed reaction is 1-hexadecanoyl-2-(9Z,12Z-octadecadienoyl)-sn-glycero-3-phosphoethanolamine + H2O = 1-hexadecanoyl-sn-glycero-3-phosphoethanolamine + (9Z,12Z)-octadecadienoate + H(+). The enzyme catalyses 1-hexadecanoyl-2-(5Z,8Z,11Z,14Z-eicosatetraenoyl)-sn-glycero-3-phosphoethanolamine + H2O = 1-hexadecanoyl-sn-glycero-3-phosphoethanolamine + (5Z,8Z,11Z,14Z)-eicosatetraenoate + H(+). It catalyses the reaction N-hexadecanoyl-1,2-di-(9Z-octadecenoyl)-sn-glycero-3-phosphoethanolamine + H2O = N-hexadecanoyl-1-(9Z-octadecenoyl)-sn-glycero-3-phosphoethanolamine + (9Z)-octadecenoate + H(+). It carries out the reaction 1,2-dihexadecanoyl-sn-glycero-3-phospho-(1'-sn-glycerol) + H2O = 1-hexadecanoyl-sn-glycero-3-phospho-(1'-sn-glycerol) + hexadecanoate + H(+). The catalysed reaction is 1-hexadecanoyl-2-(9Z-octadecenoyl)-sn-glycero-3-phosphoglycerol + H2O = 1-hexadecanoyl-sn-glycero-3-phosphoglycerol + (9Z)-octadecenoate + H(+). The enzyme catalyses 1-hexadecanoyl-2-(9Z-octadecenoyl)-sn-glycero-3-phospho-(1'-sn-glycerol) + H2O = 1-hexadecanoyl-sn-glycero-3-phospho-(1'-sn-glycerol) + (9Z)-octadecenoate + H(+). It catalyses the reaction a 1,2-diacyl-sn-glycero-3-phosphocholine + H2O = a 1-acyl-sn-glycero-3-phosphocholine + a fatty acid + H(+). It carries out the reaction 1,2-dihexadecanoyl-sn-glycero-3-phosphocholine + H2O = 1-hexadecanoyl-sn-glycero-3-phosphocholine + hexadecanoate + H(+). The catalysed reaction is 1-hexadecanoyl-2-(9Z-octadecenoyl)-sn-glycero-3-phosphocholine + H2O = 1-hexadecanoyl-sn-glycero-3-phosphocholine + (9Z)-octadecenoate + H(+). The enzyme catalyses 1-hexadecanoyl-2-(9Z,12Z-octadecadienoyl)-sn-glycero-3-phosphocholine + H2O = (9Z,12Z)-octadecadienoate + 1-hexadecanoyl-sn-glycero-3-phosphocholine + H(+). It catalyses the reaction 1-hexadecanoyl-2-(4Z,7Z,10Z,13Z,16Z,19Z-docosahexaenoyl)-sn-glycero-3-phosphocholine + H2O = (4Z,7Z,10Z,13Z,16Z,19Z)-docosahexaenoate + 1-hexadecanoyl-sn-glycero-3-phosphocholine + H(+). Functionally, secretory calcium-dependent phospholipase A2 that primarily targets extracellular phospholipids with implications in host antimicrobial defense, inflammatory response and tissue regeneration. Hydrolyzes the ester bond of the fatty acyl group attached at sn-2 position of phospholipids (phospholipase A2 activity) with preference for phosphatidylethanolamines and phosphatidylglycerols over phosphatidylcholines. Contributes to lipid remodeling of cellular membranes and generation of lipid mediators involved in pathogen clearance. Displays bactericidal activity against Gram-positive bacteria by directly hydrolyzing phospholipids of the bacterial membrane. Upon sterile inflammation, targets membrane phospholipids of extracellular mitochondria released from activated platelets, generating free unsaturated fatty acids such as arachidonate that is used by neighboring leukocytes to synthesize inflammatory eicosanoids such as leukotrienes. Simultaneously, by compromising mitochondrial membrane integrity, promotes the release in circulation of potent damage-associated molecular pattern molecules that activate the innate immune response. Plays a stem cell regulator role in the intestinal crypt. Within intracellular compartment mediates Paneth cell differentiation and its stem cell supporting functions by inhibiting Wnt signaling pathway in intestinal stem cell (ICS). Secreted in the intestinal lumen upon inflammation, acts in an autocrine way and promotes prostaglandin E2 synthesis that stimulates Wnt signaling pathway in ICS cells and tissue regeneration. May play a role in the biosynthesis of N-acyl ethanolamines that regulate energy metabolism and inflammation. Hydrolyzes N-acyl phosphatidylethanolamines to N-acyl lysophosphatidylethanolamines, which are further cleaved by a lysophospholipase D to release N-acyl ethanolamines. Independent of its catalytic activity, acts as a ligand for integrins. Binds to and activates integrins ITGAV:ITGB3, ITGA4:ITGB1 and ITGA5:ITGB1. Binds to a site (site 2) which is distinct from the classical ligand-binding site (site 1) and induces integrin conformational changes and enhanced ligand binding to site 1. Induces cell proliferation in an integrin-dependent manner. This Homo sapiens (Human) protein is Phospholipase A2, membrane associated (PLA2G2A).